We begin with the raw amino-acid sequence, 470 residues long: L-fuculokinase (470 aa).

Belongs to the FGGY kinase family. The cofactor is a divalent metal cation.

It catalyses the reaction L-fuculose + ATP = L-fuculose 1-phosphate + ADP + H(+). It participates in carbohydrate degradation; L-fucose degradation; L-lactaldehyde and glycerone phosphate from L-fucose: step 2/3. Its function is as follows. Catalyzes the phosphorylation of L-fuculose. The polypeptide is L-fuculokinase (Haemophilus influenzae (strain ATCC 51907 / DSM 11121 / KW20 / Rd)).